The sequence spans 61 residues: Potassium channel toxin alpha-KTx 3.18 (61 aa).

Positions 1–23 (MKMFFTVLVTLFVCSMIIGICEG) are cleaved as a signal peptide. 3 disulfides stabilise this stretch: Cys-30/Cys-50, Cys-36/Cys-55, and Cys-40/Cys-57. Lys-60 carries the lysine amide modification.

As to expression, expressed by the venom gland.

It is found in the secreted. Functionally, inhibits voltage-gated potassium channel rKv1.1/KCNA1 at nanomolar ranges (IC(50)=90 +-2 nM, reduction of current by 30% at 50 nM or toxin). This Mesobuthus eupeus (Lesser Asian scorpion) protein is Potassium channel toxin alpha-KTx 3.18.